The primary structure comprises 1070 residues: Alpha-glucosidase (1070 aa).

The signal sequence occupies residues 1–35 (MRSIKAASLTPLLAALFTTLSSTLALPSSVWEHQL). N-linked (GlcNAc...) asparagine glycosylation is found at N48, N99, N144, N161, N208, N384, N458, N480, and N513. Catalysis depends on D526, which acts as the Nucleophile. E529 is a catalytic residue. N544, N566, N574, N578, and N635 each carry an N-linked (GlcNAc...) asparagine glycan. The active-site Proton donor is the D730. N818, N885, N916, N983, N992, N996, N1008, N1029, N1043, and N1052 each carry an N-linked (GlcNAc...) asparagine glycan.

This sequence belongs to the glycosyl hydrolase 31 family.

It catalyses the reaction Hydrolysis of terminal, non-reducing (1-&gt;4)-linked alpha-D-glucose residues with release of alpha-D-glucose.. In terms of biological role, hydrolyzes a broad range of alpha-D-linked glucopyranosides, including maltose (alpha-1,4), sucrose (alpha-1,2), isomaltose (alpha-1,6) and turanose (alpha-1,3). This is Alpha-glucosidase from Candida tsukubaensis (Yeast).